Here is a 453-residue protein sequence, read N- to C-terminus: Bifunctional protein GlmU (453 aa).

The segment at 1–225 (MNIVILAAGT…EWETLGVNSK (225 aa)) is pyrophosphorylase. UDP-N-acetyl-alpha-D-glucosamine-binding positions include 6 to 9 (LAAG), K20, Q71, 76 to 77 (GT), 98 to 100 (YGD), G135, E150, N165, and N223. D100 contacts Mg(2+). N223 is a binding site for Mg(2+). The segment at 226–246 (AQLAELERIHQRNVADALLVD) is linker. The segment at 247 to 453 (GVTLADPARV…GYVRPVKKKS (207 aa)) is N-acetyltransferase. Positions 329 and 347 each coordinate UDP-N-acetyl-alpha-D-glucosamine. Residue H359 is the Proton acceptor of the active site. UDP-N-acetyl-alpha-D-glucosamine contacts are provided by Y362 and N373. Acetyl-CoA-binding positions include A376, 382 to 383 (NY), S401, and A419.

It in the N-terminal section; belongs to the N-acetylglucosamine-1-phosphate uridyltransferase family. In the C-terminal section; belongs to the transferase hexapeptide repeat family. In terms of assembly, homotrimer. The cofactor is Mg(2+).

The protein localises to the cytoplasm. It carries out the reaction alpha-D-glucosamine 1-phosphate + acetyl-CoA = N-acetyl-alpha-D-glucosamine 1-phosphate + CoA + H(+). The enzyme catalyses N-acetyl-alpha-D-glucosamine 1-phosphate + UTP + H(+) = UDP-N-acetyl-alpha-D-glucosamine + diphosphate. It functions in the pathway nucleotide-sugar biosynthesis; UDP-N-acetyl-alpha-D-glucosamine biosynthesis; N-acetyl-alpha-D-glucosamine 1-phosphate from alpha-D-glucosamine 6-phosphate (route II): step 2/2. The protein operates within nucleotide-sugar biosynthesis; UDP-N-acetyl-alpha-D-glucosamine biosynthesis; UDP-N-acetyl-alpha-D-glucosamine from N-acetyl-alpha-D-glucosamine 1-phosphate: step 1/1. It participates in bacterial outer membrane biogenesis; LPS lipid A biosynthesis. Functionally, catalyzes the last two sequential reactions in the de novo biosynthetic pathway for UDP-N-acetylglucosamine (UDP-GlcNAc). The C-terminal domain catalyzes the transfer of acetyl group from acetyl coenzyme A to glucosamine-1-phosphate (GlcN-1-P) to produce N-acetylglucosamine-1-phosphate (GlcNAc-1-P), which is converted into UDP-GlcNAc by the transfer of uridine 5-monophosphate (from uridine 5-triphosphate), a reaction catalyzed by the N-terminal domain. This is Bifunctional protein GlmU from Burkholderia orbicola (strain AU 1054).